We begin with the raw amino-acid sequence, 222 residues long: Iodotyrosine deiodinase (222 aa).

Residues 34–38 (RRTVR) and 61–62 (PS) contribute to the FMN site. 3 residues coordinate 3-iodo-L-tyrosine: Glu91, Tyr95, and Lys116. FMN is bound by residues 171-173 (THT) and Arg212.

Belongs to the nitroreductase family. In terms of assembly, homodimer. FMN serves as cofactor.

The catalysed reaction is 2 iodide + L-tyrosine + 2 NADP(+) = 3,5-diiodo-L-tyrosine + 2 NADPH + H(+). The enzyme catalyses iodide + L-tyrosine + NADP(+) = 3-iodo-L-tyrosine + NADPH. It catalyses the reaction 3-iodo-L-tyrosine + iodide + NADP(+) = 3,5-diiodo-L-tyrosine + NADPH + H(+). It carries out the reaction L-tyrosine + chloride + NADP(+) = 3-chloro-L-tyrosine + NADPH. The catalysed reaction is bromide + L-tyrosine + NADP(+) = 3-bromo-L-tyrosine + NADPH. Catalyzes the dehalogenation of halotyrosines such as 3-iodo-L-tyrosine and 3,5-diiodo-L-tyrosine. Likely to also catalyze the dehalogenation of other halotyrosines such as 3-bromo-L-tyrosine, 3-chloro-L-tyrosine and 3-iodo-L-tyrosine. Activity towards 3-iodo-L-tyrosine is much stronger than activity towards 3,5-diiodo-L-tyrosine and 2-iodophenol. This is Iodotyrosine deiodinase from Haliscomenobacter hydrossis (strain ATCC 27775 / DSM 1100 / LMG 10767 / O).